The chain runs to 513 residues: tRNA-2-methylthio-N(6)-dimethylallyladenosine synthase (513 aa).

The 119-residue stretch at 67–185 folds into the MTTase N-terminal domain; sequence KTFLIKTYGC…LPEILEEAYL (119 aa). C76, C112, C146, C222, C226, and C229 together coordinate [4Fe-4S] cluster. Residues 208–438 enclose the Radical SAM core domain; the sequence is REGNIKAWVN…NKKVACYSER (231 aa). The TRAM domain occupies 441–504; it reads QQYEGQTVQV…QFSLNGTFIS (64 aa).

Belongs to the methylthiotransferase family. MiaB subfamily. As to quaternary structure, monomer. [4Fe-4S] cluster is required as a cofactor.

The protein resides in the cytoplasm. It carries out the reaction N(6)-dimethylallyladenosine(37) in tRNA + (sulfur carrier)-SH + AH2 + 2 S-adenosyl-L-methionine = 2-methylsulfanyl-N(6)-dimethylallyladenosine(37) in tRNA + (sulfur carrier)-H + 5'-deoxyadenosine + L-methionine + A + S-adenosyl-L-homocysteine + 2 H(+). Functionally, catalyzes the methylthiolation of N6-(dimethylallyl)adenosine (i(6)A), leading to the formation of 2-methylthio-N6-(dimethylallyl)adenosine (ms(2)i(6)A) at position 37 in tRNAs that read codons beginning with uridine. The polypeptide is tRNA-2-methylthio-N(6)-dimethylallyladenosine synthase (Staphylococcus saprophyticus subsp. saprophyticus (strain ATCC 15305 / DSM 20229 / NCIMB 8711 / NCTC 7292 / S-41)).